The chain runs to 30 residues: Dermaseptin-3.1TR (30 aa).

In terms of tissue distribution, expressed by the skin glands.

It is found in the secreted. Has antimicrobial activity. This chain is Dermaseptin-3.1TR, found in Phyllomedusa trinitatis (Trinidad leaf frog).